We begin with the raw amino-acid sequence, 214 residues long: Nodulation protein A (214 aa).

The protein belongs to the NodA family.

The protein localises to the cytoplasm. Functionally, N-acyltransferase required for nodulation. Acts in the production of a small, heat-stable compound (Nod) that stimulates mitosis in various plant protoplasts. This chain is Nodulation protein A, found in Methylobacterium nodulans (strain LMG 21967 / CNCM I-2342 / ORS 2060).